The chain runs to 525 residues: Ent-kaurene oxidase (525 aa).

The helical transmembrane segment at 31–51 (VHWLIYVAFGAWLCSYVIHVL) threads the bilayer. Cysteine 466 contributes to the heme binding site.

Belongs to the cytochrome P450 family. Heme serves as cofactor.

Its subcellular location is the membrane. The catalysed reaction is ent-kaur-16-ene + 3 reduced [NADPH--hemoprotein reductase] + 3 O2 = ent-kaur-16-en-19-oate + 3 oxidized [NADPH--hemoprotein reductase] + 4 H2O + 4 H(+). It functions in the pathway plant hormone biosynthesis; gibberellin biosynthesis. Catalyzes three successive oxidations of the 4-methyl group of ent-kaurene giving kaurenoic acid, a key step in gibberellin (GA) biosynthesis. This is Ent-kaurene oxidase (CYP503A1) from Fusarium fujikuroi (Bakanae and foot rot disease fungus).